A 366-amino-acid polypeptide reads, in one-letter code: Aliphatic nitrilase (366 aa).

The region spanning 8–282 (FKVAAVQAQP…EGILYADIDL (275 aa)) is the CN hydrolase domain. The active-site Proton acceptor is the glutamate 48. Catalysis depends on lysine 131, which acts as the Proton donor. Cysteine 165 (nucleophile) is an active-site residue. The segment at 346 to 366 (DEQRALPSTHSDETDRATASI) is disordered. Basic and acidic residues predominate over residues 355-366 (HSDETDRATASI).

This sequence belongs to the carbon-nitrogen hydrolase superfamily. Nitrilase family. In terms of assembly, homodimer.

It carries out the reaction an aliphatic nitrile + 2 H2O = a carboxylate + NH4(+). This chain is Aliphatic nitrilase (nitA), found in Rhodococcus rhodochrous.